The following is a 137-amino-acid chain: Small ribosomal subunit protein uS12 (137 aa).

Residues 1-57 (MPTINQLVRKPRQSKIKKSDSPALNKGFNSKKKKFTDLNSPQKRGVCTRVGTMTPRK) are disordered. A 3-methylthioaspartic acid modification is found at aspartate 102. Positions 118 to 137 (SGVDGRRQGRSLYGTKKPKN) are disordered.

This sequence belongs to the universal ribosomal protein uS12 family. Part of the 30S ribosomal subunit. Contacts proteins S8 and S17. May interact with IF1 in the 30S initiation complex.

Its function is as follows. With S4 and S5 plays an important role in translational accuracy. Interacts with and stabilizes bases of the 16S rRNA that are involved in tRNA selection in the A site and with the mRNA backbone. Located at the interface of the 30S and 50S subunits, it traverses the body of the 30S subunit contacting proteins on the other side and probably holding the rRNA structure together. The combined cluster of proteins S8, S12 and S17 appears to hold together the shoulder and platform of the 30S subunit. This Staphylococcus aureus (strain COL) protein is Small ribosomal subunit protein uS12.